Here is a 546-residue protein sequence, read N- to C-terminus: MTNMFASAAPISTNNTTVEDMRRSVTYHPSVWKDHFLDYASGITEVEMEQLQKQKERIKTLLAQTLDDFVLKIELIDAIQRLGVGYHFEKEINHSLRQIYDTFQISSKDNDIRVVALRFRLLRQHGYPVPSDVFKKFIDNQGRLDESVMNNVEGMLSLYEASNYGMEGEDILDKALEISTSHLEPLASRSRRINEALEMPISKTLVRLGARKFISIYEEDESRDEDLLKFAKLDFNILQKIHQEELTHIARWWKELDLGNKLPFARDRVVECYFWILGVYFEPQYNIARRFMTKVIAMTSIIDDIYDVHGTLEELQRFTDAIRSWDIRAIDELPPYMRLCYEALLGMYAEMENEMVKQNQSYRIEYARQEMIKLVTTYMEEAKWCYSKYIPNMDEYMKLALVSGAYMMLATTSLVGILGDPITKQDFDWITNEPPILRAASVICRLMDDVVGHGIEQKISSVDCYMKENGCSKMEAVGEFSKRVKKAWKNLNEEWVEPRAASMVILVRVVNLARVINLLYVGEDSYGNSSVKTKELIKGVLVHPIK.

Mg(2+) contacts are provided by Asp-303, Asp-307, Asp-448, and Glu-456. Residues 303–307 (DDIYD) carry the DDXXD motif motif.

It belongs to the terpene synthase family. The cofactor is Mg(2+). Requires Mn(2+) as cofactor.

It carries out the reaction (2E,6E)-farnesyl diphosphate = (-)-germacrene D + diphosphate. The protein operates within secondary metabolite biosynthesis; terpenoid biosynthesis. Its function is as follows. Sesquiterpene synthase that catalyzes the formation of germacrene D from trans,trans-farnesyl diphosphate (FPP). The sequence is that of Germacrene-D synthase (GDS) from Ocimum basilicum (Sweet basil).